Reading from the N-terminus, the 83-residue chain is Large ribosomal subunit protein bL27c (83 aa).

Residues 1–21 form a disordered region; the sequence is MAHKKGAGSTKNGRDSNAKRL.

The protein belongs to the bacterial ribosomal protein bL27 family.

Its subcellular location is the plastid. It localises to the chloroplast. The polypeptide is Large ribosomal subunit protein bL27c (Phaeodactylum tricornutum (strain CCAP 1055/1)).